Here is a 302-residue protein sequence, read N- to C-terminus: MSNYLINIIGPTAIGKTSLSIKVARHFITEIISADSRQFFKEMKIGTAVPDKDELAAATHHFIQHISIADAYSVGDFEKDAILKLKELFNKHKVAVMVGGSGLYIKAITEGLDDFPKVDPEIRRNLNQHLEEDGIDWLQKKLYVLDPEYYKTADVMNPHRLIRALEICIETGKPFSSFLNQKKPERNFKNITIGLMADREMIYDRINKRVDLMIRNGLIEEARELYPQKELNALNTVGYKELFSFFDGKTDLETAISEIKKNTRRFAKRQLTWFRKDPEIKWFEFDENSKNIFDYIESKINT.

An ATP-binding site is contributed by 10 to 17 (GPTAIGKT). Residue 12-17 (TAIGKT) participates in substrate binding. The interval 35-38 (DSRQ) is interaction with substrate tRNA.

The protein belongs to the IPP transferase family. In terms of assembly, monomer. It depends on Mg(2+) as a cofactor.

The enzyme catalyses adenosine(37) in tRNA + dimethylallyl diphosphate = N(6)-dimethylallyladenosine(37) in tRNA + diphosphate. Functionally, catalyzes the transfer of a dimethylallyl group onto the adenine at position 37 in tRNAs that read codons beginning with uridine, leading to the formation of N6-(dimethylallyl)adenosine (i(6)A). The chain is tRNA dimethylallyltransferase from Christiangramia forsetii (strain DSM 17595 / CGMCC 1.15422 / KT0803) (Gramella forsetii).